The primary structure comprises 60 residues: Large ribosomal subunit protein uL30 (60 aa).

It belongs to the universal ribosomal protein uL30 family. In terms of assembly, part of the 50S ribosomal subunit.

The chain is Large ribosomal subunit protein uL30 from Verminephrobacter eiseniae (strain EF01-2).